Here is a 421-residue protein sequence, read N- to C-terminus: Diaminopimelate decarboxylase (421 aa).

Residue lysine 63 is modified to N6-(pyridoxal phosphate)lysine. Residues glycine 242 and 278-281 (EPGR) contribute to the pyridoxal 5'-phosphate site. Positions 281, 317, and 321 each coordinate substrate. The active-site Proton donor is cysteine 346. Substrate contacts are provided by glutamate 347 and tyrosine 375. Tyrosine 375 contacts pyridoxal 5'-phosphate.

It belongs to the Orn/Lys/Arg decarboxylase class-II family. LysA subfamily. Homodimer. It depends on pyridoxal 5'-phosphate as a cofactor.

The catalysed reaction is meso-2,6-diaminopimelate + H(+) = L-lysine + CO2. It functions in the pathway amino-acid biosynthesis; L-lysine biosynthesis via DAP pathway; L-lysine from DL-2,6-diaminopimelate: step 1/1. Its function is as follows. Specifically catalyzes the decarboxylation of meso-diaminopimelate (meso-DAP) to L-lysine. The polypeptide is Diaminopimelate decarboxylase (Zymomonas mobilis subsp. mobilis (strain ATCC 31821 / ZM4 / CP4)).